The chain runs to 413 residues: Serine hydroxymethyltransferase (413 aa).

Residues leucine 115 and 119–121 contribute to the (6S)-5,6,7,8-tetrahydrofolate site; that span reads GHL. The residue at position 224 (lysine 224) is an N6-(pyridoxal phosphate)lysine.

Belongs to the SHMT family. Homodimer. The cofactor is pyridoxal 5'-phosphate.

It localises to the cytoplasm. It carries out the reaction (6R)-5,10-methylene-5,6,7,8-tetrahydrofolate + glycine + H2O = (6S)-5,6,7,8-tetrahydrofolate + L-serine. It functions in the pathway one-carbon metabolism; tetrahydrofolate interconversion. Its pathway is amino-acid biosynthesis; glycine biosynthesis; glycine from L-serine: step 1/1. Catalyzes the reversible interconversion of serine and glycine with tetrahydrofolate (THF) serving as the one-carbon carrier. This reaction serves as the major source of one-carbon groups required for the biosynthesis of purines, thymidylate, methionine, and other important biomolecules. Also exhibits THF-independent aldolase activity toward beta-hydroxyamino acids, producing glycine and aldehydes, via a retro-aldol mechanism. The polypeptide is Serine hydroxymethyltransferase (Mycoplasma mycoides subsp. mycoides SC (strain CCUG 32753 / NCTC 10114 / PG1)).